The primary structure comprises 333 residues: tRNA-dihydrouridine(16) synthase (333 aa).

Residues 19–21 (PMQ) and Q80 contribute to the FMN site. C110 serves as the catalytic Proton donor. FMN-binding positions include K151, 211 to 213 (NGD), and 235 to 236 (GR).

Belongs to the Dus family. DusC subfamily. Requires FMN as cofactor.

The enzyme catalyses 5,6-dihydrouridine(16) in tRNA + NADP(+) = uridine(16) in tRNA + NADPH + H(+). It carries out the reaction 5,6-dihydrouridine(16) in tRNA + NAD(+) = uridine(16) in tRNA + NADH + H(+). Catalyzes the synthesis of 5,6-dihydrouridine (D), a modified base found in the D-loop of most tRNAs, via the reduction of the C5-C6 double bond in target uridines. Specifically modifies U16 in tRNAs. The protein is tRNA-dihydrouridine(16) synthase of Neisseria meningitidis serogroup B (strain ATCC BAA-335 / MC58).